A 71-amino-acid polypeptide reads, in one-letter code: MGVQKYTYTNPVLFWGIFEVRGTSKGVGVILTRFFWVFSGRERVLKRSSYIVILNLWLLRGFLEASDYSES.

The protein resides in the mitochondrion matrix. Its subcellular location is the kinetoplast. This is an uncharacterized protein from Trypanosoma brucei brucei.